We begin with the raw amino-acid sequence, 389 residues long: Brix domain-containing protein C1B9.03c (389 aa).

Residues 28 to 309 (SMVIRSGASE…LIKITEDAMG (282 aa)) form the Brix domain. Positions 323-350 (EEIKQQDNFHEQSRALKEKRKKEQDENV) are enriched in basic and acidic residues. A disordered region spans residues 323–389 (EEIKQQDNFH…EGSSAYSDTE (67 aa)). Basic residues predominate over residues 351 to 362 (RRKRENKKRRKD). At Ser377 the chain carries Phosphoserine. Polar residues predominate over residues 379 to 389 (NEGSSAYSDTE).

The chain is Brix domain-containing protein C1B9.03c from Schizosaccharomyces pombe (strain 972 / ATCC 24843) (Fission yeast).